The primary structure comprises 304 residues: uncharacterized protein (304 aa).

A compositionally biased stretch (basic residues) spans 1–10 (MLWAHRKKRK). A disordered region spans residues 1-28 (MLWAHRKKRKAATETTEDKPLESHRAND). A compositionally biased stretch (basic and acidic residues) spans 16–27 (TEDKPLESHRAN). Serine 39 is modified (phosphoserine). Residues 91 to 101 (KQKISGSSMTK) show a composition bias toward polar residues. 3 disordered regions span residues 91-115 (KQKI…SMED), 138-160 (SMLQ…ISPE), and 190-304 (SHTV…IYGS). Residues 151 to 160 (HAESRNISPE) are compositionally biased toward basic and acidic residues. The residue at position 158 (serine 158) is a Phosphoserine. Residues 195-206 (SQSRHSNQSHHS) show a composition bias toward low complexity. A compositionally biased stretch (polar residues) spans 208-223 (PSHQSNQSHPVYSSYQ). Positions 229 to 248 (HLSPQSYPSYSSHQSHPGHS) are enriched in low complexity. Polar residues predominate over residues 249-263 (NHQGHSGLSSHQTHL). The segment covering 264-292 (GHSNHQGHPGHSSHQSHQGQPGHPSHQSH) has biased composition (low complexity).

This is an uncharacterized protein from Mus musculus (Mouse).